A 671-amino-acid chain; its full sequence is UBA domain-containing protein RUP1 (671 aa).

Residues 1–41 enclose the UBA domain; that stretch reads MMDNQAVKSLLEMGIPHEVAVDALQRTGGNLEAAVNFIFSN. A Phosphoserine modification is found at Ser-56. Positions 68 to 87 are disordered; the sequence is GTKPCDVPNNGDQDIDMPDV. Positions 432–501 form a coiled coil; sequence SKRKQARTRS…LNSARAAKME (70 aa). The interval 643–671 is disordered; that stretch reads DGMGDPEQATNNINNGNDNDNDDDIDSDN. Over residues 661–671 the composition is skewed to acidic residues; that stretch reads NDNDDDIDSDN.

Forms a ternary complex with RSP5 and UBP2.

It localises to the cytoplasm. The protein localises to the nucleus. Its function is as follows. Modulates the activity of the RSP5 HECT ubiquitin-protein ligase through its mediation of the interaction between RSP5 and the deubiquitinase UBP2. Involved in regulation of cell wall homeostasis. In Saccharomyces cerevisiae (strain ATCC 204508 / S288c) (Baker's yeast), this protein is UBA domain-containing protein RUP1 (RUP1).